Reading from the N-terminus, the 200-residue chain is Early E1A 21 kDa protein (200 aa).

The disordered stretch occupies residues 78–98; the sequence is QDSTTATSAEEPSASTDSISS. An LXCXE motif, interaction with host RB1 motif is present at residues 114–118; it reads LRCYE. A zinc finger spans residues 136-151; the sequence is CSTCGGHEVNGFCSLC. Positions 196-200 match the Nuclear localization signal motif; the sequence is SRHDE.

As to quaternary structure, interaction with host RB1 induces the aberrant dissociation of RB1-E2F1 complex thereby disrupting RB1's activity.

E1A protein has both transforming and trans-activating activities. Plays a role in viral genome replication by driving entry of quiescent cells into the cell cycle. Disrupts the function of host retinoblastoma protein RB1/pRb and isoform early E1A 26 kDa protein stabilizes TP53, which are key regulators of the cell cycle. Induces the disassembly of the E2F1 transcription factors from RB1 by direct competition for the same binding site on RB1, with subsequent transcriptional activation of E2F1-regulated S-phase genes. Inactivation of the ability of RB1 to arrest the cell cycle is critical for cellular transformation, uncontrolled cellular growth and proliferation induced by viral infection. Stimulation of progression from G1 to S phase allows the virus to efficiently use the cellular DNA replicating machinery to achieve viral genome replication. This is Early E1A 21 kDa protein from Murine adenovirus A serotype 1 (MAdV-1).